Here is a 405-residue protein sequence, read N- to C-terminus: tRNA-specific 2-thiouridylase MnmA (405 aa).

Residues 41–48 and L67 contribute to the ATP site; that span reads AMSGGVDS. C135 serves as the catalytic Nucleophile. A disulfide bridge links C135 with C231. G159 is an ATP binding site. Residues 181–183 are interaction with tRNA; that stretch reads KDQ. The active-site Cysteine persulfide intermediate is the C231.

Belongs to the MnmA/TRMU family.

It localises to the cytoplasm. The catalysed reaction is S-sulfanyl-L-cysteinyl-[protein] + uridine(34) in tRNA + AH2 + ATP = 2-thiouridine(34) in tRNA + L-cysteinyl-[protein] + A + AMP + diphosphate + H(+). Catalyzes the 2-thiolation of uridine at the wobble position (U34) of tRNA, leading to the formation of s(2)U34. The chain is tRNA-specific 2-thiouridylase MnmA from Maricaulis maris (strain MCS10) (Caulobacter maris).